Here is a 143-residue protein sequence, read N- to C-terminus: MTPVRRRKLFILLFALSVLSAAAALVLYALRQNISLFYTPTQIVAGEAPAKHHIRVGGMVEANSIVRAKKGLAVQFKITDFENTIVVTYSGILPDLFREGQGIVAEGEVTDNHHFHATQVLAKHDANYMPPQVKSALADKVKQ.

The Cytoplasmic portion of the chain corresponds to 1-8 (MTPVRRRK). A helical; Signal-anchor for type II membrane protein membrane pass occupies residues 9–29 (LFILLFALSVLSAAAALVLYA). The Periplasmic portion of the chain corresponds to 30-143 (LRQNISLFYT…KSALADKVKQ (114 aa)). H124 and Y128 together coordinate heme.

This sequence belongs to the CcmE/CycJ family.

Its subcellular location is the cell inner membrane. Functionally, heme chaperone required for the biogenesis of c-type cytochromes. Transiently binds heme delivered by CcmC and transfers the heme to apo-cytochromes in a process facilitated by CcmF and CcmH. This chain is Cytochrome c-type biogenesis protein CcmE, found in Legionella pneumophila (strain Lens).